We begin with the raw amino-acid sequence, 470 residues long: Chromosomal replication initiator protein DnaA (470 aa).

Positions 1–68 (MENFWSLCLG…SALAEEVLST (68 aa)) are domain I, interacts with DnaA modulators. The interval 68–133 (TPVQIELALY…KKPKTLTETS (66 aa)) is domain II. A domain III, AAA+ region region spans residues 134 to 350 (GLNPAFRFDN…GALNRIIAMA (217 aa)). G178, G180, K181, and T182 together coordinate ATP. The tract at residues 351 to 470 (NFTGHAIDVS…IAVLIQVIRD (120 aa)) is domain IV, binds dsDNA.

The protein belongs to the DnaA family. In terms of assembly, oligomerizes as a right-handed, spiral filament on DNA at oriC.

It localises to the cytoplasm. Plays an essential role in the initiation and regulation of chromosomal replication. ATP-DnaA binds to the origin of replication (oriC) to initiate formation of the DNA replication initiation complex once per cell cycle. Binds the DnaA box (a 9 base pair repeat at the origin) and separates the double-stranded (ds)DNA. Forms a right-handed helical filament on oriC DNA; dsDNA binds to the exterior of the filament while single-stranded (ss)DNA is stabiized in the filament's interior. The ATP-DnaA-oriC complex binds and stabilizes one strand of the AT-rich DNA unwinding element (DUE), permitting loading of DNA polymerase. After initiation quickly degrades to an ADP-DnaA complex that is not apt for DNA replication. Binds acidic phospholipids. In Methylobacillus flagellatus (strain ATCC 51484 / DSM 6875 / VKM B-1610 / KT), this protein is Chromosomal replication initiator protein DnaA.